A 778-amino-acid chain; its full sequence is MKQIRLLAQYYVDLMMKLGLVRFSMLLALALVVLAIVVQMAVTMVLHGQVESIDVIRSIFFGLLITPWAVYFLSVVVEQLEESRQRLSRLVQKLEEMRERDLSLNVQLKDNIAQLNQEIAVREKAEAELQETFGQLKIEIKEREETQIQLEQQSSFLRSFLDASPDLVFYRNEDKEFSGCNRAMELLTGKSEKQLVHLKPADVYSPEAAAKVIETDEKVFRHNVSLTYEQWLDYPDGRKACFEIRKVPYYDRVGKRHGLMGFGRDITERKRYQDALERASRDKTTFISTISHELRTPLNGIVGLSRILLDTELTAEQEKYLKTIHVSAVTLGNIFNDIIDMDKMERRKVQLDNQPVDFTSFLADLENLSALQAQQKGLRFNLEPTLPLPHQVITDGTRLRQILWNLISNAVKFTQQGQVTVRVRYDEGDMLHFEVEDSGIGIPQDELDKIFAMYYQVKDSHGGKPATGTGIGLAVSRRLAKNMGGDITVTSEQGKGSTFTLTIHAPSVAEEVDDAFDEDDMPLPALNVLLVEDIELNVIVARSVLEKLGNSVDVAMTGKAALEMFKPGEYDLVLLDIQLPDMTGLDISRELTKRYPREDLPPLVALTANVLKDKQEYLNAGMDDVLSKPLSVPALTAMIKKFWDTQDDEESTVTTEENSKSEALLDIPMLEQYLELVGPKLITDGLAVFEKMMPGYVSVLESNLTAQDKKGIVEEGHKIKGAAGSVGLRHLQQLGQQIQSPDLPAWEDNVGEWIEEMKEEWRHDVEVLKAWVAKATKK.

The Cytoplasmic portion of the chain corresponds to 1–25 (MKQIRLLAQYYVDLMMKLGLVRFSM). The chain crosses the membrane as a helical span at residues 26-46 (LLALALVVLAIVVQMAVTMVL). Residues 47 to 57 (HGQVESIDVIR) lie on the Periplasmic side of the membrane. A helical membrane pass occupies residues 58 to 78 (SIFFGLLITPWAVYFLSVVVE). The Cytoplasmic segment spans residues 79–778 (QLEESRQRLS…KAWVAKATKK (700 aa)). One can recognise a PAS domain in the interval 153 to 223 (QSSFLRSFLD…ETDEKVFRHN (71 aa)). The PAC domain occupies 226-278 (LTYEQWLDYPDGRKACFEIRKVPYYDRVGKRHGLMGFGRDITERKRYQDALER). In terms of domain architecture, Histidine kinase spans 289–507 (TISHELRTPL…TFTLTIHAPS (219 aa)). Residue His292 is modified to Phosphohistidine; by autocatalysis. Residues 527–643 (NVLLVEDIEL…ALTAMIKKFW (117 aa)) form the Response regulatory domain. At Asp576 the chain carries 4-aspartylphosphate. Residues 678–771 (GPKLITDGLA…RHDVEVLKAW (94 aa)) form the HPt domain. Residue His717 is modified to Phosphohistidine.

In terms of processing, activation requires a sequential transfer of a phosphate group from a His in the primary transmitter domain, to an Asp in the receiver domain and to a His in the secondary transmitter domain.

The protein localises to the cell inner membrane. It catalyses the reaction ATP + protein L-histidine = ADP + protein N-phospho-L-histidine.. Member of the two-component regulatory system ArcB/ArcA. Sensor-regulator protein for anaerobic repression of the arc modulon. Activates ArcA via a four-step phosphorelay. ArcB can also dephosphorylate ArcA by a reverse phosphorelay involving His-717 and Asp-576. The sequence is that of Aerobic respiration control sensor protein ArcB (arcB) from Escherichia coli (strain K12).